A 212-amino-acid polypeptide reads, in one-letter code: Probable GTP-binding protein EngB (212 aa).

Residues 38-210 enclose the EngB-type G domain; it reads SLPEIAFVGK…KASLAKCIKP (173 aa). GTP contacts are provided by residues 46-53, 73-77, 91-94, 158-161, and 189-191; these read GKSNVGKS, GRTRQ, DLPG, TKSD, and VSN. Serine 53 and threonine 75 together coordinate Mg(2+).

This sequence belongs to the TRAFAC class TrmE-Era-EngA-EngB-Septin-like GTPase superfamily. EngB GTPase family. Mg(2+) serves as cofactor.

Necessary for normal cell division and for the maintenance of normal septation. In Rickettsia africae (strain ESF-5), this protein is Probable GTP-binding protein EngB.